Consider the following 218-residue polypeptide: Glutathione S-transferase class-mu 26 kDa isozyme 7 (218 aa).

One can recognise a GST N-terminal domain in the interval 2–83; sequence PAKLGYWKIR…YIADKHGMLG (82 aa). Glutathione is bound by residues 7–8, 41–45, 54–55, and 67–68; these read YW, WLGDK, NL, and QS. Positions 85 to 203 constitute a GST C-terminal domain; that stretch reads TPEERARISM…KSERFIKWPL (119 aa). A substrate-binding site is contributed by Tyr-111.

The protein belongs to the GST superfamily. Mu family. In terms of assembly, homodimer.

The catalysed reaction is RX + glutathione = an S-substituted glutathione + a halide anion + H(+). Its function is as follows. Conjugation of reduced glutathione to a wide number of exogenous and endogenous hydrophobic electrophiles. In terms of biological role, GST isoenzymes appear to play a central role in the parasite detoxification system. Other functions are also suspected including a role in increasing the solubility of haematin in the parasite gut. The polypeptide is Glutathione S-transferase class-mu 26 kDa isozyme 7 (Fasciola hepatica (Liver fluke)).